The chain runs to 363 residues: 3-dehydroquinate synthase (363 aa).

NAD(+) contacts are provided by residues 134–135, K147, and K156; that span reads TT. 3 residues coordinate Zn(2+): E189, H254, and H271.

It belongs to the sugar phosphate cyclases superfamily. Dehydroquinate synthase family. Co(2+) serves as cofactor. The cofactor is Zn(2+). NAD(+) is required as a cofactor.

It localises to the cytoplasm. The enzyme catalyses 7-phospho-2-dehydro-3-deoxy-D-arabino-heptonate = 3-dehydroquinate + phosphate. It participates in metabolic intermediate biosynthesis; chorismate biosynthesis; chorismate from D-erythrose 4-phosphate and phosphoenolpyruvate: step 2/7. In terms of biological role, catalyzes the conversion of 3-deoxy-D-arabino-heptulosonate 7-phosphate (DAHP) to dehydroquinate (DHQ). The protein is 3-dehydroquinate synthase of Prochlorococcus marinus (strain MIT 9312).